Consider the following 929-residue polypeptide: Collagen alpha-1(XII) chain (929 aa).

Residues 1–49 (DVEIFAVGVKDAVRSELEAIATPPTATHVYTVEDFDAFQRISFELTQSI) form the VWFA 1 domain. 6 Fibronectin type-III domains span residues 67-156 (PPRD…LEVR), 158-250 (APRN…VGEP), 251-340 (KNLR…LQER), 342-432 (SPRD…ASPD), 434-521 (KIVK…LSPF), and 523-613 (APRS…TLRD). Asn98 is a glycosylation site (N-linked (GlcNAc...) asparagine). 3 O-linked (Xyl...) (chondroitin sulfate) serine glycosylation sites follow: Ser231, Ser324, and Ser415. Residues 633–805 (DIVLLVDGSW…SLLTNIVNDL (173 aa)) enclose the VWFA 2 domain. The Fibronectin type-III 7 domain maps to 821–910 (PPSNLVTSEP…AGTETTLPIP (90 aa)).

The protein belongs to the fibril-associated collagens with interrupted helices (FACIT) family. Trimer of identical chains each containing 190 kDa of non-triple-helical sequences. Post-translationally, the triple-helical tail is stabilized by disulfide bonds at each end. Prolines at the third position of the tripeptide repeating unit (G-X-Y) are hydroxylated in some or all of the chains.

It is found in the secreted. It localises to the extracellular space. Its subcellular location is the extracellular matrix. Type XII collagen interacts with type I collagen-containing fibrils, the COL1 domain could be associated with the surface of the fibrils, and the COL2 and NC3 domains may be localized in the perifibrillar matrix. Could play a developmental role in regeneration. This chain is Collagen alpha-1(XII) chain, found in Notophthalmus viridescens (Eastern newt).